Consider the following 206-residue polypeptide: Tektin bundle-interacting protein 1 (206 aa).

In terms of assembly, microtubule inner protein component of sperm flagellar doublet microtubules.

The protein localises to the cytoplasm. It is found in the cytoskeleton. It localises to the cilium axoneme. Its subcellular location is the flagellum axoneme. Functionally, microtubule inner protein (MIP) part of the dynein-decorated doublet microtubules (DMTs) in cilia axoneme, which is required for motile cilia beating. Located at the center of the tektin bundle where may function to recruit tektins or stabilize the bundle. The protein is Tektin bundle-interacting protein 1 of Mus musculus (Mouse).